The sequence spans 555 residues: MPTTVDDVLEHGGEFHFFQKQMFFLLALLSATFAPIYVGIVFLGFTPDHRCRSPGVAELSLRCGWSPAEELNYTVPGPGPAGEASPRQCRRYEVDWNQSTFDCVDPLASLDTNRSRLPLGPCRDGWVYETPGSSIVTEFNLVCANSWMLDLFQSSVNVGFFIGSMSIGYIADRFGRKLCLLTTVLINAAAGVLMAISPTYTWMLIFRLIQGLVSKAGWLIGYILITEFVGRRYRRTVGIFYQVAYTVGLLVLAGVAYALPHWRWLQFTVSLPNFFFLLYYWCIPESPRWLISQNKNAEAMRIIKHIAKKNGKSLPASLQRLRLEEETGKKLNPSFLDLVRTPQIRKHTMILMYNWFTSSVLYQGLIMHMGLAGDNIYLDFFYSALVEFPAAFMIILTIDRIGRRYPWAASNMVAGAACLASVFIPGDLQWLKIIISCLGRMGITMAYEIVCLVNAELYPTFIRNLGVHICSSMCDIGGIITPFLVYRLTNIWLELPLMVFGVLGLVAGGLVLLLPETKGKALPETIEEAENMQRPRKNKEKMIYLQVQKLDIPLN.

The Cytoplasmic segment spans residues 1-22 (MPTTVDDVLEHGGEFHFFQKQM). Residues 23–43 (FFLLALLSATFAPIYVGIVFL) traverse the membrane as a helical segment. Topologically, residues 44 to 150 (GFTPDHRCRS…LVCANSWMLD (107 aa)) are extracellular. Residue Asn72 is glycosylated (N-linked (GlcNAc...) asparagine). Residues 151–171 (LFQSSVNVGFFIGSMSIGYIA) traverse the membrane as a helical segment. Topologically, residues 172–177 (DRFGRK) are cytoplasmic. Residues 178-198 (LCLLTTVLINAAAGVLMAISP) form a helical membrane-spanning segment. Topologically, residues 199-208 (TYTWMLIFRL) are extracellular. Residues 209–229 (IQGLVSKAGWLIGYILITEFV) form a helical membrane-spanning segment. Over 230 to 238 (GRRYRRTVG) the chain is Cytoplasmic. Residues 239–259 (IFYQVAYTVGLLVLAGVAYAL) traverse the membrane as a helical segment. Residues 260–263 (PHWR) are Extracellular-facing. Residues 264–284 (WLQFTVSLPNFFFLLYYWCIP) traverse the membrane as a helical segment. Positions 284–288 (PESPR) match the Proline-rich sequence motif. The Cytoplasmic segment spans residues 285–348 (ESPRWLISQN…VRTPQIRKHT (64 aa)). The helical transmembrane segment at 349–369 (MILMYNWFTSSVLYQGLIMHM) threads the bilayer. Topologically, residues 370–375 (GLAGDN) are extracellular. The chain crosses the membrane as a helical span at residues 376-396 (IYLDFFYSALVEFPAAFMIIL). The Cytoplasmic segment spans residues 397-414 (TIDRIGRRYPWAASNMVA). A helical transmembrane segment spans residues 415–435 (GAACLASVFIPGDLQWLKIII). Residues 436–441 (SCLGRM) are Extracellular-facing. A helical transmembrane segment spans residues 442-462 (GITMAYEIVCLVNAELYPTFI). Topologically, residues 463–464 (RN) are cytoplasmic. Residues 465 to 485 (LGVHICSSMCDIGGIITPFLV) form a helical membrane-spanning segment. Over 486 to 494 (YRLTNIWLE) the chain is Extracellular. Residues 495-515 (LPLMVFGVLGLVAGGLVLLLP) traverse the membrane as a helical segment. Residues 516 to 555 (ETKGKALPETIEEAENMQRPRKNKEKMIYLQVQKLDIPLN) are Cytoplasmic-facing.

Belongs to the major facilitator (TC 2.A.1) superfamily. Organic cation transporter (TC 2.A.1.19) family. Tyrosine phosphorylated by tyrosine-protein kinase YES1. Mainly expressed in kidney, in the cortex and medulla. Localized in testis, mostly to peritubular myoid cells and Leydig cells and also detected along the basal membrane of Sertoli cells. Expressed in brain, in neurons of the cerebral cortex and in various subcortical nuclei. In the brain, also detected in the dopaminergic regions of the substantia nigra. Expressed in tracheal and bronchial ciliated epithelium in the respiratory tract. Also detected in secretory phase endometrium, in scattered stromal cells. Expressed in spleen, placenta, small intestine and spinal cord. Weakly expressed in prostate, uterus and lung. In terms of tissue distribution, mainly expressed in kidney, bone marrow and testis. Expressed in colon, skeletal muscle, spinal cord, placenta and liver.

Its subcellular location is the basolateral cell membrane. The protein resides in the basal cell membrane. It is found in the apical cell membrane. It carries out the reaction (R)-noradrenaline(out) = (R)-noradrenaline(in). It catalyses the reaction (R)-adrenaline(out) = (R)-adrenaline(in). The enzyme catalyses serotonin(out) = serotonin(in). The catalysed reaction is dopamine(out) = dopamine(in). It carries out the reaction histamine(out) = histamine(in). It catalyses the reaction thiamine(in) = thiamine(out). The enzyme catalyses creatinine(in) = creatinine(out). The catalysed reaction is 1-methylnicotinamide(out) = 1-methylnicotinamide(in). It carries out the reaction guanidine(out) = guanidine(in). It catalyses the reaction choline(out) = choline(in). The enzyme catalyses agmatine(out) = agmatine(in). The catalysed reaction is putrescine(out) = putrescine(in). It carries out the reaction spermidine(in) = spermidine(out). It catalyses the reaction tyramine(in) = tyramine(out). The enzyme catalyses L-histidyl-L-proline diketopiperazine(in) = L-histidyl-L-proline diketopiperazine(out). The catalysed reaction is (R)-salsolinol(in) = (R)-salsolinol(out). It carries out the reaction N-methyl-(R)-salsolinol(in) = N-methyl-(R)-salsolinol(out). It catalyses the reaction acetylcholine(in) = acetylcholine(out). The enzyme catalyses prostaglandin F2alpha(out) = prostaglandin F2alpha(in). The catalysed reaction is prostaglandin E2(out) = prostaglandin E2(in). Tyrosine phosphorylation of the transporter leads to activation of the transport activity. TEA uptake is activated by tyrosine phosphorylation. Inhibited by cGMP, most likely through a cGMP-binding protein that interacts with OCT2. Functionally, electrogenic voltage-dependent transporter that mediates the transport of a variety of organic cations such as endogenous bioactive amines, cationic drugs and xenobiotics. Functions as a Na(+)-independent, bidirectional uniporter. Cation cellular uptake or release is driven by the electrochemical potential, i.e. membrane potential and concentration gradient. However, may also engage electroneutral cation exchange when saturating concentrations of cation substrates are reached. Predominantly expressed at the basolateral membrane of hepatocytes and proximal tubules and involved in the uptake and disposition of cationic compounds by hepatic and renal clearance from the blood flow. Implicated in monoamine neurotransmitters uptake such as histamine, dopamine, adrenaline/epinephrine, noradrenaline/norepinephrine, serotonin and tyramine, thereby supporting a physiological role in the central nervous system by regulating interstitial concentrations of neurotransmitters. Also capable of transporting dopaminergic neuromodulators cyclo(his-pro), salsolinol and N-methyl-salsolinol, thereby involved in the maintenance of dopaminergic cell integrity in the central nervous system. Mediates the bidirectional transport of acetylcholine (ACh) at the apical membrane of ciliated cell in airway epithelium, thereby playing a role in luminal release of ACh from bronchial epithelium. Also transports guanidine and endogenous monoamines such as vitamin B1/thiamine, creatinine and N-1-methylnicotinamide (NMN). Mediates the uptake and efflux of quaternary ammonium compound choline. Mediates the bidirectional transport of polyamine agmatine and the uptake of polyamines putrescine and spermidine. Able to transport non-amine endogenous compounds such as prostaglandin E2 (PGE2) and prostaglandin F2-alpha (PGF2-alpha). Also involved in the uptake of xenobiotic 4-(4-(dimethylamino)styryl)-N-methylpyridinium (ASP). May contribute to regulate the transport of organic compounds in testis across the blood-testis-barrier. In terms of biological role, in contrast with isoform 1, not able to transport guanidine, creatinine, cimetidine and metformin. This Homo sapiens (Human) protein is Solute carrier family 22 member 2.